The sequence spans 101 residues: MKTYLILATLALIFSAMLTNICAVAFEQPKYCTEAPGDGKCPGEVRPAISTANWTFSKSFGGCVAHRWGSCGNHSNVFPKCLSCMTTCDPENATTYCDGWN.

The N-terminal stretch at 1 to 23 (MKTYLILATLALIFSAMLTNICA) is a signal peptide. The BPTI/Kunitz inhibitor domain occupies 32–88 (CTEAPGDGKCPGEVRPAISTANWTFSKSFGGCVAHRWGSCGNHSNVFPKCLSCMTTC). Cystine bridges form between Cys32–Cys88, Cys41–Cys71, and Cys63–Cys84. Residues Asn53, Asn73, and Asn92 are each glycosylated (N-linked (GlcNAc...) asparagine).

As to expression, expressed in female salivary gland and ovary.

The protein localises to the secreted. In terms of biological role, anticoagulant protein that modulates blood feeding of ticks on vertebrate species. Delays normal clotting of host plasma. This is Kunitz-type anticoagulant protein HA11 from Hyalomma asiaticum (Tick).